The chain runs to 408 residues: MSTAADSPLSLAHYYLPVYRPRQVVLERGQGSRVWDDAGREYLDLSSGIAVSGLGHNDPDLVAALTEQAGKLWHTSNVFFSAPPLKLAEELVSASRFAHKVFLCNSGTEANEAAIKLVRKWASSQGRPADKRVIVTFRGSFHGRTLASVTATAQPKYQEGYEPLPGGFRYVDFNDVAALEAAMAGGDVAAVMVEPIQGEGGVMPAAPGFLSRVRALCDQHDALLVLDEIQCGMGRTGTLFAHWQEQVTPDIVTLAKALGGGFPIGAMLAGPKVAQTMQFGAHGTTFGGNPLAAAVARVALRKLASPQIADNVVRQSAALRAGLEALNAEFGLFAQIRGRGLMLGAVLAPEHAGQAGAILDLAAKHGLLLLQAGPDVLRFVPALNLTDAELADGLARLRLATAEYVAQP.

Pyridoxal 5'-phosphate contacts are provided by residues 107 to 108 (GT) and Phe141. Position 144 (Arg144) interacts with N(2)-acetyl-L-ornithine. 227 to 230 (DEIQ) lines the pyridoxal 5'-phosphate pocket. Lys256 is modified (N6-(pyridoxal phosphate)lysine). Thr284 serves as a coordination point for N(2)-acetyl-L-ornithine. Residue Thr285 participates in pyridoxal 5'-phosphate binding.

It belongs to the class-III pyridoxal-phosphate-dependent aminotransferase family. ArgD subfamily. Homodimer. Pyridoxal 5'-phosphate serves as cofactor.

It localises to the cytoplasm. It catalyses the reaction N(2)-acetyl-L-ornithine + 2-oxoglutarate = N-acetyl-L-glutamate 5-semialdehyde + L-glutamate. It functions in the pathway amino-acid biosynthesis; L-arginine biosynthesis; N(2)-acetyl-L-ornithine from L-glutamate: step 4/4. The protein is Acetylornithine aminotransferase of Xanthomonas axonopodis pv. citri (strain 306).